The primary structure comprises 178 residues: Histone deacetylase complex subunit SAP30L (178 aa).

2 disulfide bridges follow: C24–C25 and C33–C69. The Atypical zinc-finger motif lies at C24 to H72. Positions R80–V99 are disordered. The short motif at N81–K86 is the Nuclear localization signal (NLS) element. Positions R83 to R85 are important for DNA and phosphoinositide binding.

This sequence belongs to the SAP30 family. In terms of assembly, interacts with components of the histone deacetylase complex sin3a, hdac1 and hdac2. Binds histones and nucleosomes. As to expression, detected in embryos at 2dpf (at protein level). Widely expressed during embryogenesis and in adults.

The protein resides in the nucleus. The protein localises to the nucleolus. Functions as a transcription repressor, probably via its interaction with histone deacetylase complexes. Required for normal expression of numerous target genes. Involved in the functional recruitment of the class 1 Sin3-histone deacetylase complex (HDAC) to the nucleolus. Binds DNA, apparently without sequence-specificity, and bends bound double-stranded DNA. Binds phosphoinositol phosphates (phosphoinositol 3-phosphate, phosphoinositol 4-phosphate and phosphoinositol 5-phosphate) via the same basic sequence motif that mediates DNA binding and nuclear import. The protein is Histone deacetylase complex subunit SAP30L (sap30l) of Danio rerio (Zebrafish).